Here is a 272-residue protein sequence, read N- to C-terminus: Protein FAM210A (272 aa).

Residues D117–K229 enclose the DUF1279 domain. Residues V136–A156 form a helical membrane-spanning segment. The stretch at K229–V271 forms a coiled coil. The disordered stretch occupies residues K246–E272.

This sequence belongs to the FAM210 family. As to quaternary structure, interacts with ATAD3A.

The protein resides in the membrane. Its subcellular location is the mitochondrion. The protein localises to the cytoplasm. May play a role in the structure and strength of both muscle and bone. The sequence is that of Protein FAM210A (FAM210A) from Homo sapiens (Human).